The primary structure comprises 675 residues: Probable potassium transport system protein Kup (675 aa).

The span at 1–12 (MEPAMPEHDGDH) shows a compositional bias: basic and acidic residues. The interval 1–25 (MEPAMPEHDGDHASNPPHGVGIPND) is disordered. Transmembrane regions (helical) follow at residues 62 to 82 (ALLA…LYAL), 104 to 124 (LASL…VILI), 153 to 173 (WLFG…SIIT), 195 to 215 (IIIP…VLGT), 222 to 242 (FGPI…KGIF), 255 to 275 (FALE…GSVV), 300 to 320 (WLFF…ALLI), 332 to 352 (LLVP…ATVI), 390 to 410 (IYLP…VLAF), 419 to 439 (AYGI…MVVF), 450 to 470 (VAIV…ANVL), and 472 to 492 (IPDG…IMTT).

Belongs to the HAK/KUP transporter (TC 2.A.72) family.

The protein resides in the cell inner membrane. The catalysed reaction is K(+)(in) + H(+)(in) = K(+)(out) + H(+)(out). Functionally, transport of potassium into the cell. Likely operates as a K(+):H(+) symporter. This chain is Probable potassium transport system protein Kup, found in Gluconobacter oxydans (strain 621H) (Gluconobacter suboxydans).